The sequence spans 491 residues: Glycogen synthase (491 aa).

Arginine 20 serves as a coordination point for ADP-alpha-D-glucose.

It belongs to the glycosyltransferase 1 family. Bacterial/plant glycogen synthase subfamily.

The enzyme catalyses [(1-&gt;4)-alpha-D-glucosyl](n) + ADP-alpha-D-glucose = [(1-&gt;4)-alpha-D-glucosyl](n+1) + ADP + H(+). It participates in glycan biosynthesis; glycogen biosynthesis. Its function is as follows. Synthesizes alpha-1,4-glucan chains using ADP-glucose. The protein is Glycogen synthase of Prosthecochloris aestuarii (strain DSM 271 / SK 413).